A 373-amino-acid polypeptide reads, in one-letter code: Forkhead box protein E1 (373 aa).

Residues 19–51 are disordered; it reads KEERGETAAGAGVPGEATGRGAGGRRRKRPLQR. Residues 41 to 50 show a composition bias toward basic residues; it reads GGRRRKRPLQ. A DNA-binding region (fork-head) is located at residues 53-147; sequence KPPYSYIALI…ESGSFLRRRK (95 aa).

Post-translationally, phosphorylated. As to expression, detected in adult brain, placenta, lung, liver, skeletal muscle, kidney, pancreas, heart, colon, small intestine testis and thymus. Expression was strongest in heart and pancreas.

Its subcellular location is the nucleus. Functionally, transcription factor that binds consensus sites on a variety of gene promoters and activate their transcription. Involved in proper palate formation, most probably through the expression of MSX1 and TGFB3 genes which are direct targets of this transcription factor. Also implicated in thyroid gland morphogenesis. May indirectly play a role in cell growth and migration through the regulation of WNT5A expression. The chain is Forkhead box protein E1 (FOXE1) from Homo sapiens (Human).